Consider the following 908-residue polypeptide: Magnesium-transporting ATPase, P-type 1 (908 aa).

Over residues 1-20 (MTDMNIENRKLNRPASENDK) the composition is skewed to basic and acidic residues. Residues 1-21 (MTDMNIENRKLNRPASENDKQ) are disordered. The Cytoplasmic portion of the chain corresponds to 1 to 80 (MTDMNIENRK…QVPPALIQLL (80 aa)). Residues 81–101 (QAFNNPFIYVLMALAGVSFIT) form a helical membrane-spanning segment. The Extracellular segment spans residues 102 to 113 (DYWLPLRRGEET). The chain crosses the membrane as a helical span at residues 114–134 (DLTGVLIILTMVSLSGLLRFW). The Cytoplasmic segment spans residues 135 to 293 (QEFRTNRAAQ…QTAFDRGVNS (159 aa)). The helical transmembrane segment at 294–314 (VSWLLIRFMLIMVPVVLLING) threads the bilayer. Topologically, residues 315–323 (FSKGDWVEA) are extracellular. Residues 324–341 (SLFALAVAVGLTPEMLPM) form a helical membrane-spanning segment. Residue Glu337 participates in Mg(2+) binding. Residues 342–704 (IVSSNLAKGA…IKGRETFGNI (363 aa)) lie on the Cytoplasmic side of the membrane. Residue Asp379 is the 4-aspartylphosphate intermediate of the active site. Residues Asp650, Asp654, and Asn718 each coordinate Mg(2+). Residues 705–724 (IKYLNMTASSNFGNVFSVLV) traverse the membrane as a helical segment. At 725-733 (ASAFIPFLP) the chain is on the extracellular side. Residues 734–753 (MLAIHLLIQNLMYDISQLSL) traverse the membrane as a helical segment. Residues Asn743 and Asp747 each contribute to the Mg(2+) site. At 754–775 (PWDKMDKEFLRKPRKWDAKNIG) the chain is on the cytoplasmic side. Residues 776–799 (RFMLWIGPTSSIFDITTFALMWYV) form a helical membrane-spanning segment. The Extracellular portion of the chain corresponds to 800 to 808 (FAANNVEAQ). The helical transmembrane segment at 809–827 (ALFQSGWFIEGLLSQTLVV) threads the bilayer. At 828–840 (HMLRTQKIPFIQS) the chain is on the cytoplasmic side. Residues 841–860 (RATLPVLLTTGLIMAIGIYI) traverse the membrane as a helical segment. Residues 861-875 (PFSPLGAMVGLEPLP) lie on the Extracellular side of the membrane. Residues 876–895 (LSYFPWLVATLLSYCLVAQG) traverse the membrane as a helical segment. Over 896 to 908 (MKRFYIKRFGQWF) the chain is Cytoplasmic.

The protein belongs to the cation transport ATPase (P-type) (TC 3.A.3) family. Type IIIB subfamily.

It localises to the cell inner membrane. It carries out the reaction Mg(2+)(out) + ATP + H2O = Mg(2+)(in) + ADP + phosphate + H(+). Functionally, mediates magnesium influx to the cytosol. The protein is Magnesium-transporting ATPase, P-type 1 (mgtB) of Salmonella typhimurium (strain LT2 / SGSC1412 / ATCC 700720).